The sequence spans 103 residues: A-type ATP synthase subunit F (103 aa).

It belongs to the V-ATPase F subunit family. Has multiple subunits with at least A(3), B(3), C, D, E, F, H, I and proteolipid K(x).

It is found in the cell membrane. Component of the A-type ATP synthase that produces ATP from ADP in the presence of a proton gradient across the membrane. This chain is A-type ATP synthase subunit F, found in Pyrococcus furiosus (strain ATCC 43587 / DSM 3638 / JCM 8422 / Vc1).